The following is a 483-amino-acid chain: Trigger factor (483 aa).

Positions Gly162 to Pro243 constitute a PPIase FKBP-type domain. Residues Ala459–Gly483 are disordered. Acidic residues predominate over residues Glu473–Gly483.

The protein belongs to the FKBP-type PPIase family. Tig subfamily.

Its subcellular location is the cytoplasm. It carries out the reaction [protein]-peptidylproline (omega=180) = [protein]-peptidylproline (omega=0). Functionally, involved in protein export. Acts as a chaperone by maintaining the newly synthesized protein in an open conformation. Functions as a peptidyl-prolyl cis-trans isomerase. In Frankia casuarinae (strain DSM 45818 / CECT 9043 / HFP020203 / CcI3), this protein is Trigger factor.